The primary structure comprises 216 residues: MNLVLMGLPGAGKGTQAQLIVKDFDIPHISTGDIFRAAIKNQTPMGVEAKKFIDKGELVPDEVTNGIVQERLAQDDTKDGFMLDGFPRNLAQADALNAMLVDSDRQLDAVINIHVRPEVLVERLSGRFICRNCGTTYHRLYNPTKVEGTCDVCGGHDFYQRDDDKPETVKNRLDVNIKLNTPLIDFYKKQGVLYTIDGEQDIDKVYQAVKEVLTNL.

Gly-10–Thr-15 provides a ligand contact to ATP. The NMP stretch occupies residues Ser-30–Val-59. AMP contacts are provided by residues Thr-31, Arg-36, Glu-57–Val-59, Gly-85–Arg-88, and Gln-92. The LID stretch occupies residues Gly-126–Asp-164. Arg-127 is a binding site for ATP. 2 residues coordinate Zn(2+): Cys-130 and Cys-133. Thr-136 to Tyr-137 lines the ATP pocket. Zn(2+)-binding residues include Cys-150 and Cys-153. Residues Arg-161 and Arg-172 each contribute to the AMP site. Gln-200 is a binding site for ATP.

The protein belongs to the adenylate kinase family. In terms of assembly, monomer.

Its subcellular location is the cytoplasm. It carries out the reaction AMP + ATP = 2 ADP. Its pathway is purine metabolism; AMP biosynthesis via salvage pathway; AMP from ADP: step 1/1. Its function is as follows. Catalyzes the reversible transfer of the terminal phosphate group between ATP and AMP. Plays an important role in cellular energy homeostasis and in adenine nucleotide metabolism. The chain is Adenylate kinase from Limosilactobacillus fermentum (strain NBRC 3956 / LMG 18251) (Lactobacillus fermentum).